The sequence spans 378 residues: Phospho-N-acetylmuramoyl-pentapeptide-transferase (378 aa).

Transmembrane regions (helical) follow at residues 27–47 (TAFA…WLIN), 74–94 (TMGG…WADL), 96–116 (YPYV…GFLD), 135–155 (LVYQ…MRAY), 184–204 (WTYV…VVFY), 216–236 (GLAI…AYAG), 256–276 (LTIF…YNAH), 280–300 (IFMG…VAVL), 305–325 (ILLL…ILQV), and 355–375 (KIIA…LTTL).

It belongs to the glycosyltransferase 4 family. MraY subfamily. Mg(2+) is required as a cofactor.

The protein localises to the cell inner membrane. It catalyses the reaction UDP-N-acetyl-alpha-D-muramoyl-L-alanyl-gamma-D-glutamyl-meso-2,6-diaminopimeloyl-D-alanyl-D-alanine + di-trans,octa-cis-undecaprenyl phosphate = di-trans,octa-cis-undecaprenyl diphospho-N-acetyl-alpha-D-muramoyl-L-alanyl-D-glutamyl-meso-2,6-diaminopimeloyl-D-alanyl-D-alanine + UMP. It participates in cell wall biogenesis; peptidoglycan biosynthesis. In terms of biological role, catalyzes the initial step of the lipid cycle reactions in the biosynthesis of the cell wall peptidoglycan: transfers peptidoglycan precursor phospho-MurNAc-pentapeptide from UDP-MurNAc-pentapeptide onto the lipid carrier undecaprenyl phosphate, yielding undecaprenyl-pyrophosphoryl-MurNAc-pentapeptide, known as lipid I. This is Phospho-N-acetylmuramoyl-pentapeptide-transferase from Solibacter usitatus (strain Ellin6076).